We begin with the raw amino-acid sequence, 495 residues long: Probable biotin-dependent acyl-coenzyme A carboxylase beta3 subunit (495 aa).

The CoA carboxyltransferase N-terminal domain maps to 1–236 (MSRITTDQLR…PLPAPQTPAP (236 aa)). A CoA carboxyltransferase C-terminal domain is found at 242–470 (TWDSVVASRR…SNAIAAEVHA (229 aa)).

It belongs to the AccD/PCCB family. As to quaternary structure, the biotin-dependent acyl-CoA carboxylase complex is composed of an AccA protein, which contains the biotin carboxylase (BC) and biotin carboxyl carrier protein (BCCP) domains, and an AccD protein, which contains the carboxyl transferase (CT) domain.

Functionally, component of a biotin-dependent acyl-CoA carboxylase complex. This subunit transfers the CO2 from carboxybiotin to the CoA ester substrate. The sequence is that of Probable biotin-dependent acyl-coenzyme A carboxylase beta3 subunit (accD3) from Mycobacterium bovis (strain ATCC BAA-935 / AF2122/97).